We begin with the raw amino-acid sequence, 430 residues long: Serine--tRNA ligase (430 aa).

237 to 239 (TAE) is a binding site for L-serine. Position 268-270 (268-270 (RSE)) interacts with ATP. E291 is an L-serine binding site. Residue 355-358 (EISS) coordinates ATP. S391 contacts L-serine.

This sequence belongs to the class-II aminoacyl-tRNA synthetase family. Type-1 seryl-tRNA synthetase subfamily. Homodimer. The tRNA molecule binds across the dimer.

The protein localises to the cytoplasm. It carries out the reaction tRNA(Ser) + L-serine + ATP = L-seryl-tRNA(Ser) + AMP + diphosphate + H(+). The enzyme catalyses tRNA(Sec) + L-serine + ATP = L-seryl-tRNA(Sec) + AMP + diphosphate + H(+). The protein operates within aminoacyl-tRNA biosynthesis; selenocysteinyl-tRNA(Sec) biosynthesis; L-seryl-tRNA(Sec) from L-serine and tRNA(Sec): step 1/1. Catalyzes the attachment of serine to tRNA(Ser). Is also able to aminoacylate tRNA(Sec) with serine, to form the misacylated tRNA L-seryl-tRNA(Sec), which will be further converted into selenocysteinyl-tRNA(Sec). This Klebsiella pneumoniae (strain 342) protein is Serine--tRNA ligase.